We begin with the raw amino-acid sequence, 320 residues long: Ferrochelatase (320 aa).

Fe cation-binding residues include histidine 194 and glutamate 275.

The protein belongs to the ferrochelatase family. In terms of assembly, monomer.

It localises to the cytoplasm. The catalysed reaction is heme b + 2 H(+) = protoporphyrin IX + Fe(2+). The protein operates within porphyrin-containing compound metabolism; protoheme biosynthesis; protoheme from protoporphyrin-IX: step 1/1. In terms of biological role, catalyzes the ferrous insertion into protoporphyrin IX. This is Ferrochelatase from Escherichia coli O9:H4 (strain HS).